A 100-amino-acid polypeptide reads, in one-letter code: UPF0213 protein YhbQ (100 aa).

The GIY-YIG domain maps to 2-77 (TPWFLYLIRT…KQLTKRQKER (76 aa)).

It belongs to the UPF0213 family.

This Escherichia coli (strain K12 / MC4100 / BW2952) protein is UPF0213 protein YhbQ.